A 396-amino-acid chain; its full sequence is DNA repair protein RAD14 (396 aa).

Residues 20–29 are compositionally biased toward basic and acidic residues; it reads NRKRALERLQ. Disordered regions lie at residues 20–101 and 116–156; these read NRKR…EQRQ and NLKQ…KFQP. Low complexity predominate over residues 41-62; it reads PSSTPKSTSTTTTKETGSYSPT. Residues 63–78 are compositionally biased toward polar residues; that stretch reads KTLSQIVNSDSVQVSS. Residues 118–127 are compositionally biased toward basic and acidic residues; sequence KQRENQKDDS. Residues 128–153 show a composition bias toward polar residues; it reads TTSSKPVDNIRLNQNRPDSVVSSTKK. Zn(2+) is bound by residues cysteine 223, cysteine 226, cysteine 244, and cysteine 247. Residues 223-247 fold into a zinc finger; sequence CRECQSMEVDANLMTNFNVRACRKC.

The protein belongs to the XPA family.

Its subcellular location is the nucleus. Its function is as follows. Involved in DNA excision repair. This is DNA repair protein RAD14 (RAD14) from Candida albicans (strain SC5314 / ATCC MYA-2876) (Yeast).